A 274-amino-acid chain; its full sequence is Dermonecrotic toxin LspiSicTox-betaIII2 (274 aa).

The active site involves His-5. Positions 25 and 27 each coordinate Mg(2+). The active-site Nucleophile is His-41. Intrachain disulfides connect Cys-45-Cys-51 and Cys-47-Cys-189. Asp-85 serves as a coordination point for Mg(2+).

Belongs to the arthropod phospholipase D family. Class II subfamily. Mg(2+) serves as cofactor. Expressed by the venom gland.

The protein localises to the secreted. It carries out the reaction an N-(acyl)-sphingosylphosphocholine = an N-(acyl)-sphingosyl-1,3-cyclic phosphate + choline. It catalyses the reaction an N-(acyl)-sphingosylphosphoethanolamine = an N-(acyl)-sphingosyl-1,3-cyclic phosphate + ethanolamine. The enzyme catalyses a 1-acyl-sn-glycero-3-phosphocholine = a 1-acyl-sn-glycero-2,3-cyclic phosphate + choline. The catalysed reaction is a 1-acyl-sn-glycero-3-phosphoethanolamine = a 1-acyl-sn-glycero-2,3-cyclic phosphate + ethanolamine. Dermonecrotic toxins cleave the phosphodiester linkage between the phosphate and headgroup of certain phospholipids (sphingolipid and lysolipid substrates), forming an alcohol (often choline) and a cyclic phosphate. This toxin acts on sphingomyelin (SM). It may also act on ceramide phosphoethanolamine (CPE), lysophosphatidylcholine (LPC) and lysophosphatidylethanolamine (LPE), but not on lysophosphatidylserine (LPS), and lysophosphatidylglycerol (LPG). It acts by transphosphatidylation, releasing exclusively cyclic phosphate products as second products. Induces dermonecrosis, hemolysis, increased vascular permeability, edema, inflammatory response, and platelet aggregation. The chain is Dermonecrotic toxin LspiSicTox-betaIII2 from Loxosceles spinulosa (Recluse spider).